The chain runs to 164 residues: Ribosome-binding factor A (164 aa).

It belongs to the RbfA family. Monomer. Binds 30S ribosomal subunits, but not 50S ribosomal subunits or 70S ribosomes.

The protein localises to the cytoplasm. In terms of biological role, one of several proteins that assist in the late maturation steps of the functional core of the 30S ribosomal subunit. Associates with free 30S ribosomal subunits (but not with 30S subunits that are part of 70S ribosomes or polysomes). Required for efficient processing of 16S rRNA. May interact with the 5'-terminal helix region of 16S rRNA. The sequence is that of Ribosome-binding factor A from Mycobacterium leprae (strain Br4923).